A 332-amino-acid chain; its full sequence is Super small secreted glycoprotein (332 aa).

Residues 1 to 33 form the signal peptide; it reads MGSGYQLLQLPRERFRKTSFLVWVIILFQRAIS. Asn41 is a glycosylation site (N-linked (GlcNAc...) asparagine; by host). Cystine bridges form between Cys109–Cys136 and Cys122–Cys148. N-linked (GlcNAc...) asparagine; by host glycans are attached at residues Asn205, Asn229, Asn239, Asn258, and Asn269.

The protein belongs to the filoviruses glycoprotein family.

The protein localises to the secreted. The sequence is that of Super small secreted glycoprotein (GP) from Reston ebolavirus (strain Reston-89) (REBOV).